The following is a 753-amino-acid chain: Catalase-peroxidase (753 aa).

A signal peptide spans 1–39 (MLPRVNKRSNCIAKKTSNRLISAVSLAIASLCISQSALA). Residues 118 to 241 (WHSTGTYRMS…LAAVQMGLIY (124 aa)) constitute a cross-link (tryptophyl-tyrosyl-methioninium (Trp-Tyr) (with M-267)). The active-site Proton acceptor is the histidine 119. A cross-link (tryptophyl-tyrosyl-methioninium (Tyr-Met) (with W-118)) is located at residues 241–267 (YVNPEGPNGNHDPISAAADIRDVFARM). Residue histidine 282 participates in heme b binding.

This sequence belongs to the peroxidase family. Peroxidase/catalase subfamily. As to quaternary structure, homodimer or homotetramer. The cofactor is heme b. In terms of processing, formation of the three residue Trp-Tyr-Met cross-link is important for the catalase, but not the peroxidase activity of the enzyme.

The enzyme catalyses H2O2 + AH2 = A + 2 H2O. It carries out the reaction 2 H2O2 = O2 + 2 H2O. Functionally, bifunctional enzyme with both catalase and broad-spectrum peroxidase activity. In Pseudoalteromonas atlantica (strain T6c / ATCC BAA-1087), this protein is Catalase-peroxidase.